The chain runs to 212 residues: Ribonuclease HII (212 aa).

The RNase H type-2 domain maps to 4 to 206 (EVQCGIDEAG…YKKIKEDVES (203 aa)). A divalent metal cation-binding residues include aspartate 10, glutamate 11, and aspartate 103.

Belongs to the RNase HII family. Mn(2+) serves as cofactor. It depends on Mg(2+) as a cofactor.

It is found in the cytoplasm. The enzyme catalyses Endonucleolytic cleavage to 5'-phosphomonoester.. Endonuclease that specifically degrades the RNA of RNA-DNA hybrids. The protein is Ribonuclease HII of Thermoplasma volcanium (strain ATCC 51530 / DSM 4299 / JCM 9571 / NBRC 15438 / GSS1).